We begin with the raw amino-acid sequence, 688 residues long: Potassium-transporting ATPase ATP-binding subunit (688 aa).

Helical transmembrane passes span 35 to 55 (VMFVVYVGSILTTILWVQALG), 62 to 82 (AGFILAITIWLWFTVLFANFA), 219 to 239 (IALTILLVALTIVFLGVIVTL), and 260 to 280 (VLIALLVCLIPTTIAGLLSAI). Residue Asp313 is the 4-aspartylphosphate intermediate of the active site. ATP-binding positions include Asp350, Glu354, 383-390 (FSAHTRMS), and Lys401. Residues Asp524 and Asp528 each coordinate Mg(2+). The next 3 membrane-spanning stretches (helical) occupy residues 594–614 (FAIIPAAFVTTYPQLAALNVM), 622–642 (AILSAVIFNALIIVFLIPLAL), and 668–688 (VIVPFIGIKLIDLAIAAVGLA).

Belongs to the cation transport ATPase (P-type) (TC 3.A.3) family. Type IA subfamily. In terms of assembly, the system is composed of three essential subunits: KdpA, KdpB and KdpC.

The protein resides in the cell inner membrane. It carries out the reaction K(+)(out) + ATP + H2O = K(+)(in) + ADP + phosphate + H(+). In terms of biological role, part of the high-affinity ATP-driven potassium transport (or Kdp) system, which catalyzes the hydrolysis of ATP coupled with the electrogenic transport of potassium into the cytoplasm. This subunit is responsible for energy coupling to the transport system and for the release of the potassium ions to the cytoplasm. This Dechloromonas aromatica (strain RCB) protein is Potassium-transporting ATPase ATP-binding subunit.